The following is a 422-amino-acid chain: Putative polyketide beta-ketoacyl synthase 1 (422 aa).

The Ketosynthase family 3 (KS3) domain occupies 2–416 (TRRVAVTGIG…GFQSAVLLTG (415 aa)). Active-site for beta-ketoacyl synthase activity residues include Cys-169, His-309, and His-346.

It belongs to the thiolase-like superfamily. Beta-ketoacyl-ACP synthases family.

Its pathway is antibiotic biosynthesis; curamycin biosynthesis. This is Putative polyketide beta-ketoacyl synthase 1 (curA) from Streptomyces cyaneus (Streptomyces curacoi).